We begin with the raw amino-acid sequence, 452 residues long: Phosphoglucosamine mutase 2 (452 aa).

The active-site Phosphoserine intermediate is S101. Residues S101, D245, D247, and D249 each contribute to the Mg(2+) site. S101 is subject to Phosphoserine.

Belongs to the phosphohexose mutase family. Mg(2+) serves as cofactor. Post-translationally, activated by phosphorylation.

It carries out the reaction alpha-D-glucosamine 1-phosphate = D-glucosamine 6-phosphate. Functionally, catalyzes the conversion of glucosamine-6-phosphate to glucosamine-1-phosphate. This chain is Phosphoglucosamine mutase 2, found in Shewanella amazonensis (strain ATCC BAA-1098 / SB2B).